A 931-amino-acid polypeptide reads, in one-letter code: DNA mismatch repair protein MutS (931 aa).

Over residues 1-10 the composition is skewed to low complexity; the sequence is MMDDTAMPAR. Residues 1–34 form a disordered region; sequence MMDDTAMPARAEADAAEDELAAPAGIDRTAKADK. 674 to 681 is a binding site for ATP; sequence GPNMAGKS.

Belongs to the DNA mismatch repair MutS family.

Functionally, this protein is involved in the repair of mismatches in DNA. It is possible that it carries out the mismatch recognition step. This protein has a weak ATPase activity. The polypeptide is DNA mismatch repair protein MutS (Azorhizobium caulinodans (strain ATCC 43989 / DSM 5975 / JCM 20966 / LMG 6465 / NBRC 14845 / NCIMB 13405 / ORS 571)).